A 478-amino-acid polypeptide reads, in one-letter code: Antiviral innate immune response effector IFIT1 (478 aa).

6 TPR repeats span residues 52 to 85, 95 to 128, 139 to 174, 183 to 216, 218 to 249, and 251 to 284; these read VGIH…MQKE, LVTW…CKKP, PEID…DHEN, ISAY…NPDN, YLKV…NMSS, and TYVF…TPTS. W147 is an mRNA binding site. Position 190 (G190) interacts with RNA. Residues K259, H289, Q290, and K336 each contribute to the RNA site. TPR repeat units lie at residues 305–339, 340–373, 378–412, and 437–470; these read ATKG…KPTF, EVAH…KPVV, QDIH…EQTS, and LESL…AADF.

This sequence belongs to the IFIT family. Component of an interferon-dependent multiprotein complex, at least composed of IFIT1, IFIT2 and IFIT3. Interacts (via TPR repeats 1-4) with RPL15. Interacts with STING1/MITA; could disrupt STING1 interaction with MAVS or TBK1, acting as a negative-feedback regulator of virus-triggered signaling. Interacts with EIF3E; this could be an alternative way to inhibit translation. Post-translationally, phosphorylated. ISGylated.

It localises to the cytoplasm. Its function is as follows. Plays a key role in the innate immune response as part of an interferon-dependent multiprotein complex, recognizing and sequestering viral RNAs that lack host-specific 2'-O-methylation at their 5' cap. By distinguishing these RNAs from host mRNAs, inhibits their translation by competing with the translation initiation factor eIF4E. Could also prevent viral replication through its interaction with DNA replication origin-binding protein E1 of several viruses. Causes the translocation of E1 from the nucleus to the cytoplasm and can also inhibit its helicase activity in vitro. The chain is Antiviral innate immune response effector IFIT1 from Macaca fascicularis (Crab-eating macaque).